A 367-amino-acid polypeptide reads, in one-letter code: Anhydro-N-acetylmuramic acid kinase (367 aa).

11-18 (GTSLDGVD) serves as a coordination point for ATP.

The protein belongs to the anhydro-N-acetylmuramic acid kinase family.

The enzyme catalyses 1,6-anhydro-N-acetyl-beta-muramate + ATP + H2O = N-acetyl-D-muramate 6-phosphate + ADP + H(+). Its pathway is amino-sugar metabolism; 1,6-anhydro-N-acetylmuramate degradation. The protein operates within cell wall biogenesis; peptidoglycan recycling. Catalyzes the specific phosphorylation of 1,6-anhydro-N-acetylmuramic acid (anhMurNAc) with the simultaneous cleavage of the 1,6-anhydro ring, generating MurNAc-6-P. Is required for the utilization of anhMurNAc either imported from the medium or derived from its own cell wall murein, and thus plays a role in cell wall recycling. The polypeptide is Anhydro-N-acetylmuramic acid kinase (Bradyrhizobium diazoefficiens (strain JCM 10833 / BCRC 13528 / IAM 13628 / NBRC 14792 / USDA 110)).